Reading from the N-terminus, the 314-residue chain is CD-NTase-associated protein 12 (314 aa).

Residues 5 to 129 (RIFIGSSSEE…VKGISLARFK (125 aa)) enclose the TIR domain. Positions 160-314 (SSTLAAVYYE…DLIKIVDEDN (155 aa)) are STING domain. Residues Phe-171, Pro-234, and Asp-252 each coordinate 3',3'-c-di-GMP.

This sequence in the C-terminal section; belongs to the bacterial STING family. Homodimer. Forms homodimers; in the presence of c-di-GMP forms filaments with an ordered array of parallel-stacked subunits.

It carries out the reaction NAD(+) + H2O = ADP-D-ribose + nicotinamide + H(+). NAD(+) hydrolase activity is strongly stimulated by c-di-GMP, weakly by 3'3'-cGAMP, very weakly by c-di-AMP but not at all by 2'3'-cGAMP. Self-association of TIR domains is required for NADase activity. Functionally, effector protein of a CBASS antiviral system with NAD(+) hydrolase activity. CBASS (cyclic oligonucleotide-based antiphage signaling system) provides immunity against bacteriophage. The CD-NTase protein synthesizes cyclic nucleotides in response to infection; these serve as specific second messenger signals. The signals activate a diverse range of effectors, leading to bacterial cell death and thus abortive phage infection. A type I-(GG) CBASS system. Its function is as follows. Binds c-di-GMP (synthesized by the cognate CdnE encoded upstream in the same operon), and about 10-fold less well 3'3'-cGAMP, but not c-di-AMP, 2'-3'-cGAMP or cUMP-AMP (tested without the N-terminal TIR domain). Upon activation by c-di-GMP forms filaments which hydrolyze NAD(+); filament formation is required for enzyme activation. This chain is CD-NTase-associated protein 12, found in Capnocytophaga granulosa (strain ATCC 51502 / DSM 11449 / JCM 8566 / LMG 16022 / NCTC 12948 / B0611).